The chain runs to 566 residues: Mucin-21 (566 aa).

The signal sequence occupies residues 1-24; that stretch reads MKMQKGNVLLMFGLLLHLEAATNS. Asn25 is a glycosylation site (N-linked (GlcNAc...) asparagine). The tract at residues 25–68 is disordered; it reads NETSTSANTGSSVISSGASTATNSGSSVTSSGVSTATISGSSVT. Topologically, residues 25 to 479 are extracellular; it reads NETSTSANTG…KPGGSLVPWE (455 aa). A run of 28 repeats spans residues 31–44, 45–59, 60–74, 75–89, 90–104, 105–119, 120–134, 135–149, 150–164, 165–179, 180–194, 195–209, 210–224, 225–239, 244–254, 255–269, 270–284, 285–299, 300–314, 315–329, 330–344, 345–359, 360–374, 375–389, 390–404, 405–419, 420–434, and 435–449. Positions 31–435 are 28 X 15 AA approximate tandem repeats; the sequence is ANTGSSVISS…STTSSGANTA (405 aa). The interval 106–456 is disordered; that stretch reads TNSESSTTSS…SGTAALTGMH (351 aa). The chain crosses the membrane as a helical span at residues 480–500; sequence IFLITLVSVVAAVGLFAGLFF. The Cytoplasmic portion of the chain corresponds to 501–566; that stretch reads CVRNSLSLRN…MEMSGRNSGP (66 aa). The segment at 521–566 is cytoplasmic tail; it reads GLNHGLGPGPGGNHGAPHRPRWSPNWFWRRPVSSIAMEMSGRNSGP.

In terms of processing, O-glycosylated. As to expression, expressed in lung, large intestine, thymus, and testis. Expressed in normal and malignant bronchial epithelial cells.

It is found in the cell membrane. The protein is Mucin-21 (MUC21) of Homo sapiens (Human).